Consider the following 694-residue polypeptide: PTS system fructose-specific EIIABC component (694 aa).

Residues Pro-4–Phe-149 enclose the PTS EIIA type-2 domain. The active-site Tele-phosphohistidine intermediate; for EIIA activity is the His-68. Residue His-68 is modified to Phosphohistidine; by HPr. The 97-residue stretch at Phe-179 to Lys-275 folds into the PTS EIIB type-2 domain. Residue Cys-185 is the Phosphocysteine intermediate; for EIIB activity of the active site. Phosphocysteine; by EIIA is present on Cys-185. One can recognise a PTS EIIC type-2 domain in the interval Ile-310–Lys-687. Helical transmembrane passes span Val-318–Ile-338, Gly-364–Val-384, Leu-390–Val-410, Val-422–Val-442, Ile-461–Ile-481, Leu-502–Val-522, Val-542–Ala-562, Ala-576–Val-596, Ile-602–Ala-622, and Gly-655–Ile-675.

It is found in the cell membrane. It carries out the reaction D-fructose(out) + N(pros)-phospho-L-histidyl-[protein] = D-fructose 1-phosphate(in) + L-histidyl-[protein]. Functionally, the phosphoenolpyruvate-dependent sugar phosphotransferase system (sugar PTS), a major carbohydrate active transport system, catalyzes the phosphorylation of incoming sugar substrates concomitantly with their translocation across the cell membrane. This system is involved in fructose transport. The protein is PTS system fructose-specific EIIABC component of Mycoplasma pneumoniae (strain ATCC 29342 / M129 / Subtype 1) (Mycoplasmoides pneumoniae).